A 294-amino-acid polypeptide reads, in one-letter code: Nucleotide-binding protein Reut_A0350 (294 aa).

8–15 (GISGSGKS) is a binding site for ATP. Position 57 to 60 (57 to 60 (DIRS)) interacts with GTP.

It belongs to the RapZ-like family.

Its function is as follows. Displays ATPase and GTPase activities. The sequence is that of Nucleotide-binding protein Reut_A0350 from Cupriavidus pinatubonensis (strain JMP 134 / LMG 1197) (Cupriavidus necator (strain JMP 134)).